The chain runs to 79 residues: Sulfur carrier protein TusA (79 aa).

Catalysis depends on Cys-16, which acts as the Cysteine persulfide intermediate.

The protein belongs to the sulfur carrier protein TusA family.

The protein localises to the cytoplasm. Functionally, sulfur carrier protein which probably makes part of a sulfur-relay system. The sequence is that of Sulfur carrier protein TusA from Pseudomonas aeruginosa (strain LESB58).